The primary structure comprises 96 residues: Protein Vpr (96 aa).

Residues 1–42 (MEQAPENQGPQREPYNEWTLELLEELKSEAVRHFPRIWLHSL) are homooligomerization. Phosphoserine; by host is present on residues Ser79, Ser94, and Ser96.

Belongs to the HIV-1 VPR protein family. In terms of assembly, homooligomer, may form homodimer. Interacts with p6-gag region of the Pr55 Gag precursor protein through a (Leu-X-X)4 motif near the C-terminus of the P6gag protein. Interacts with host UNG. May interact with host RAD23A/HHR23A. Interacts with host VPRBP/DCAF1, leading to hijack the CUL4A-RBX1-DDB1-DCAF1/VPRBP complex, mediating ubiquitination of host proteins such as TERT and ZGPAT and arrest of the cell cycle in G2 phase. In terms of processing, phosphorylated on several residues by host. These phosphorylations regulate VPR activity for the nuclear import of the HIV-1 pre-integration complex.

It is found in the virion. The protein resides in the host nucleus. The protein localises to the host extracellular space. During virus replication, may deplete host UNG protein, and incude G2-M cell cycle arrest. Acts by targeting specific host proteins for degradation by the 26S proteasome, through association with the cellular CUL4A-DDB1 E3 ligase complex by direct interaction with host VPRPB/DCAF-1. Cell cycle arrest reportedly occurs within hours of infection and is not blocked by antiviral agents, suggesting that it is initiated by the VPR carried into the virion. Additionally, VPR induces apoptosis in a cell cycle dependent manner suggesting that these two effects are mechanistically linked. Detected in the serum and cerebrospinal fluid of AIDS patient, VPR may also induce cell death to bystander cells. Its function is as follows. During virus entry, plays a role in the transport of the viral pre-integration (PIC) complex to the host nucleus. This function is crucial for viral infection of non-dividing macrophages. May act directly at the nuclear pore complex, by binding nucleoporins phenylalanine-glycine (FG)-repeat regions. The protein is Protein Vpr of Human immunodeficiency virus type 1 group M subtype B (isolate SF33) (HIV-1).